The following is a 352-amino-acid chain: N-acetyl-gamma-glutamyl-phosphate reductase (352 aa).

The protein belongs to the NAGSA dehydrogenase family. Type 1 subfamily.

Its subcellular location is the cytoplasm. It carries out the reaction N-acetyl-L-glutamate 5-semialdehyde + phosphate + NADP(+) = N-acetyl-L-glutamyl 5-phosphate + NADPH + H(+). It functions in the pathway amino-acid biosynthesis; L-arginine biosynthesis; N(2)-acetyl-L-ornithine from L-glutamate: step 3/4. Catalyzes the NADPH-dependent reduction of N-acetyl-5-glutamyl phosphate to yield N-acetyl-L-glutamate 5-semialdehyde. The chain is N-acetyl-gamma-glutamyl-phosphate reductase from Nostoc ellipsosporum.